A 172-amino-acid polypeptide reads, in one-letter code: Large ribosomal subunit protein uL10 (172 aa).

It belongs to the universal ribosomal protein uL10 family. As to quaternary structure, part of the ribosomal stalk of the 50S ribosomal subunit. The N-terminus interacts with L11 and the large rRNA to form the base of the stalk. The C-terminus forms an elongated spine to which L12 dimers bind in a sequential fashion forming a multimeric L10(L12)X complex.

Forms part of the ribosomal stalk, playing a central role in the interaction of the ribosome with GTP-bound translation factors. This Brucella anthropi (strain ATCC 49188 / DSM 6882 / CCUG 24695 / JCM 21032 / LMG 3331 / NBRC 15819 / NCTC 12168 / Alc 37) (Ochrobactrum anthropi) protein is Large ribosomal subunit protein uL10.